A 347-amino-acid polypeptide reads, in one-letter code: NADH-ubiquinone oxidoreductase chain 2 (347 aa).

The next 9 membrane-spanning stretches (helical) occupy residues 1–21 (MNPF…MIVM), 59–79 (YFMT…INLL), 93–115 (TASM…HFWV), 149–169 (INPN…GWGG), 178–198 (IMAY…IYNP), 201–221 (TILN…MFAL), 239–259 (IITT…PLTG), 274–294 (DSII…YFYM), and 325–345 (LLPT…MLVV).

It belongs to the complex I subunit 2 family. As to quaternary structure, core subunit of respiratory chain NADH dehydrogenase (Complex I) which is composed of 45 different subunits. Interacts with TMEM242.

The protein localises to the mitochondrion inner membrane. The enzyme catalyses a ubiquinone + NADH + 5 H(+)(in) = a ubiquinol + NAD(+) + 4 H(+)(out). In terms of biological role, core subunit of the mitochondrial membrane respiratory chain NADH dehydrogenase (Complex I) which catalyzes electron transfer from NADH through the respiratory chain, using ubiquinone as an electron acceptor. Essential for the catalytic activity and assembly of complex I. In Hippopotamus amphibius (Hippopotamus), this protein is NADH-ubiquinone oxidoreductase chain 2.